A 461-amino-acid polypeptide reads, in one-letter code: Major capsid protein (461 aa).

The segment covering 1 to 18 has biased composition (polar residues); it reads MSTPTISADTTAQNATST. The tract at residues 1 to 22 is disordered; sequence MSTPTISADTTAQNATSTEVRE.

It is found in the virion. Functionally, major protein of the capsid. The sequence is that of Major capsid protein (MCP) from Spodoptera frugiperda ascovirus 1a (SfAV-1a).